Reading from the N-terminus, the 399-residue chain is S-adenosylmethionine synthase (399 aa).

Residue His16 participates in ATP binding. A Mg(2+)-binding site is contributed by Asp18. K(+) is bound at residue Glu44. The L-methionine site is built by Glu57 and Gln100. Residues 100–110 form a flexible loop region; that stretch reads QSSDIAQGVNE. Residues 177–179, 244–245, Asp253, 259–260, Ala276, and Lys280 contribute to the ATP site; these read DAK, RF, and RK. Asp253 lines the L-methionine pocket. Position 284 (Lys284) interacts with L-methionine.

It belongs to the AdoMet synthase family. Homotetramer; dimer of dimers. Mg(2+) is required as a cofactor. It depends on K(+) as a cofactor.

The protein resides in the cytoplasm. The catalysed reaction is L-methionine + ATP + H2O = S-adenosyl-L-methionine + phosphate + diphosphate. The protein operates within amino-acid biosynthesis; S-adenosyl-L-methionine biosynthesis; S-adenosyl-L-methionine from L-methionine: step 1/1. In terms of biological role, catalyzes the formation of S-adenosylmethionine (AdoMet) from methionine and ATP. The overall synthetic reaction is composed of two sequential steps, AdoMet formation and the subsequent tripolyphosphate hydrolysis which occurs prior to release of AdoMet from the enzyme. The polypeptide is S-adenosylmethionine synthase (Lactococcus lactis subsp. cremoris (strain MG1363)).